The sequence spans 364 residues: Lipoyl synthase, mitochondrial (364 aa).

The tract at residues 34 to 53 (PNFQDFIQNSDNSKDDFENY) is disordered. 7 residues coordinate [4Fe-4S] cluster: Cys-99, Cys-104, Cys-110, Cys-130, Cys-134, Cys-137, and Ser-345. In terms of domain architecture, Radical SAM core spans 115–334 (EHGTQTATIM…EQRGNELGFL (220 aa)).

The protein belongs to the radical SAM superfamily. Lipoyl synthase family. The cofactor is [4Fe-4S] cluster.

The protein localises to the mitochondrion. It carries out the reaction [[Fe-S] cluster scaffold protein carrying a second [4Fe-4S](2+) cluster] + N(6)-octanoyl-L-lysyl-[protein] + 2 oxidized [2Fe-2S]-[ferredoxin] + 2 S-adenosyl-L-methionine + 4 H(+) = [[Fe-S] cluster scaffold protein] + N(6)-[(R)-dihydrolipoyl]-L-lysyl-[protein] + 4 Fe(3+) + 2 hydrogen sulfide + 2 5'-deoxyadenosine + 2 L-methionine + 2 reduced [2Fe-2S]-[ferredoxin]. It functions in the pathway protein modification; protein lipoylation via endogenous pathway; protein N(6)-(lipoyl)lysine from octanoyl-[acyl-carrier-protein]: step 2/2. In terms of biological role, catalyzes the radical-mediated insertion of two sulfur atoms into the C-6 and C-8 positions of the octanoyl moiety bound to the lipoyl domains of lipoate-dependent enzymes, thereby converting the octanoylated domains into lipoylated derivatives. This Drosophila grimshawi (Hawaiian fruit fly) protein is Lipoyl synthase, mitochondrial.